The primary structure comprises 180 residues: Large ribosomal subunit protein uL5 (180 aa).

It belongs to the universal ribosomal protein uL5 family. Part of the 50S ribosomal subunit; part of the 5S rRNA/L5/L18/L25 subcomplex. Contacts the 5S rRNA and the P site tRNA. Forms a bridge to the 30S subunit in the 70S ribosome.

This is one of the proteins that bind and probably mediate the attachment of the 5S RNA into the large ribosomal subunit, where it forms part of the central protuberance. In the 70S ribosome it contacts protein S13 of the 30S subunit (bridge B1b), connecting the 2 subunits; this bridge is implicated in subunit movement. Contacts the P site tRNA; the 5S rRNA and some of its associated proteins might help stabilize positioning of ribosome-bound tRNAs. This is Large ribosomal subunit protein uL5 from Streptococcus uberis (strain ATCC BAA-854 / 0140J).